Reading from the N-terminus, the 1184-residue chain is Fibulin-2 (1184 aa).

The signal sequence occupies residues 1-27; that stretch reads MVLLWEPAGAWLALGLALALGPSVAAA. The interval 28–177 is subdomain NA (Cys-rich); the sequence is APRQDCTGVE…ELICYQLPGC (150 aa). Residues 28–444 are n; that stretch reads APRQDCTGVE…EGSTKDLIET (417 aa). Residues 178 to 444 are subdomain NB (Cys-free); the sequence is HGNFSDAEEG…EGSTKDLIET (267 aa). Residue Asn-180 is glycosylated (N-linked (GlcNAc...) asparagine). Disordered regions lie at residues 221–293 and 399–437; these read VQAG…MAVT and IPPT…PEGS. Gly residues predominate over residues 224 to 236; that stretch reads GAGGPPAALGGGS. The span at 252 to 261 shows a compositional bias: low complexity; it reads PRPTAAAALG. A compositionally biased stretch (acidic residues) spans 276–288; it reads DSEEEEEEEEERE. The residue at position 277 (Ser-277) is a Phosphoserine. Over residues 423-436 the composition is skewed to polar residues; that stretch reads PNSVHSIPRSSPEG. 38 cysteine pairs are disulfide-bonded: Cys-445-Cys-472, Cys-446-Cys-479, Cys-459-Cys-480, Cys-489-Cys-518, Cys-502-Cys-519, Cys-521-Cys-545, Cys-522-Cys-552, Cys-535-Cys-553, Cys-608-Cys-620, Cys-616-Cys-629, Cys-631-Cys-644, Cys-683-Cys-693, Cys-689-Cys-702, Cys-704-Cys-717, Cys-723-Cys-736, Cys-730-Cys-745, Cys-751-Cys-762, Cys-768-Cys-781, Cys-775-Cys-790, Cys-796-Cys-808, Cys-814-Cys-827, Cys-821-Cys-836, Cys-843-Cys-856, Cys-862-Cys-875, Cys-869-Cys-884, Cys-886-Cys-899, Cys-905-Cys-917, Cys-913-Cys-926, Cys-928-Cys-941, Cys-947-Cys-956, Cys-952-Cys-965, Cys-967-Cys-980, Cys-986-Cys-998, Cys-994-Cys-1007, Cys-1009-Cys-1023, Cys-1029-Cys-1042, Cys-1036-Cys-1051, and Cys-1056-Cys-1068. 3 Anaphylatoxin-like domains span residues 445-480, 488-519, and 521-553; these read CCAA…RHCC, SCMA…KQCC, and CCGL…LSCC. N-linked (GlcNAc...) asparagine glycosylation occurs at Asn-507. The EGF-like 1; calcium-binding domain occupies 604–645; the sequence is DQDECLLLPGELCQHLCINTVGSYHCACFPGFSLQDDGRTCR. In terms of domain architecture, EGF-like 2 spans 679–718; that stretch reads QPNTCKDNGPCKQVCSTVGGSAICSCFPGYAIMADGVSCE. Positions 719 to 763 constitute an EGF-like 3; calcium-binding domain; sequence DINECVTDLHTCSRGEHCVNTLGSFHCYKALTCEPGYALKDGECE. An EGF-like 4; calcium-binding domain is found at 764 to 809; it reads DVDECAMGTHTCQPGFLCQNTKGSFYCQARQRCMDGFLQDPEGNCV. The EGF-like 5; calcium-binding domain occupies 810–857; it reads DINECTSLSEPCRPGFSCINTVGSYTCQRNPLICARGYHASDDGTKCV. Residues 858 to 900 enclose the EGF-like 6; calcium-binding domain; sequence DVNECETGVHRCGEGQVCHNLPGSYRCDCKAGFQRDAFGRGCI. Positions 901 to 942 constitute an EGF-like 7; calcium-binding domain; sequence DVNECWASPGRLCQHTCENTLGSYRCSCASGFLLAADGKRCE. Residues 943-981 form the EGF-like 8; calcium-binding domain; that stretch reads DVNECEAQRCSQECANIYGSYQCYCRQGYQLAEDGHTCT. Residues 982-1024 form the EGF-like 9; calcium-binding domain; that stretch reads DIDECAQGAGILCTFRCLNVPGSYQCACPEQGYTMTANGRSCK. Positions 1025 to 1069 constitute an EGF-like 10; calcium-binding domain; the sequence is DVDECALGTHNCSEAETCHNIQGSFRCLRFECPPNYVQVSKTKCE. An N-linked (GlcNAc...) asparagine glycan is attached at Asn-1035. Positions 1070 to 1184 are domain III; it reads RTTCHDFLEC…MHIFFTTFAL (115 aa).

The protein belongs to the fibulin family. In terms of assembly, homotrimer; disulfide-linked. Interacts with LAMA2. Interacts with FBN1 (via N-terminal domain). Forms a ternary complex with ELN and FBN1. Post-translationally, O-glycosylated with core 1 or possibly core 8 glycans. It is unsure if the O-glycosylation is on Thr-347 or Ser-348. Component of both basement membranes and other connective tissues. Expressed in heart, placenta and ovary.

The protein resides in the secreted. The protein localises to the extracellular space. It localises to the extracellular matrix. Its binding to fibronectin and some other ligands is calcium dependent. May act as an adapter that mediates the interaction between FBN1 and ELN. This chain is Fibulin-2 (FBLN2), found in Homo sapiens (Human).